The primary structure comprises 283 residues: Pyridoxal kinase PdxY (283 aa).

S8 is a substrate binding site. The ATP site is built by D110 and E147. D219 is a substrate binding site.

The protein belongs to the pyridoxine kinase family. PdxY subfamily. Homodimer. Mg(2+) serves as cofactor.

The catalysed reaction is pyridoxal + ATP = pyridoxal 5'-phosphate + ADP + H(+). Its pathway is cofactor metabolism; pyridoxal 5'-phosphate salvage; pyridoxal 5'-phosphate from pyridoxal: step 1/1. Its function is as follows. Pyridoxal kinase involved in the salvage pathway of pyridoxal 5'-phosphate (PLP). Catalyzes the phosphorylation of pyridoxal to PLP. This is Pyridoxal kinase PdxY from Leifsonia xyli subsp. xyli (strain CTCB07).